A 437-amino-acid polypeptide reads, in one-letter code: Serine carboxypeptidase-like 10 (437 aa).

Residues 1 to 21 (MGSTLKHLLLLLLVLIRHVDS) form the signal peptide. Intrachain disulfides connect Cys-80–Cys-327, Cys-243–Cys-257, and Cys-281–Cys-293. Asn-101 carries N-linked (GlcNAc...) asparagine glycosylation. Ser-175 is a catalytic residue. Residue Asn-328 is glycosylated (N-linked (GlcNAc...) asparagine). Asp-362 is a catalytic residue. A glycan (N-linked (GlcNAc...) asparagine) is linked at Asn-378. Residue His-415 is part of the active site. An N-linked (GlcNAc...) asparagine glycan is attached at Asn-422.

It belongs to the peptidase S10 family. Expressed in senescent leaves.

It is found in the secreted. Functionally, involved in the biosynthesis of sinapoylated anthocyanins. The protein is Serine carboxypeptidase-like 10 (SCPL10) of Arabidopsis thaliana (Mouse-ear cress).